The following is a 485-amino-acid chain: MRSAPAIRACQRICRCLLSGFGGQVDGRQPEQLSKGTGSFVGPVRSQAELPRNEPREAPESGGEGSEPLVEICRKRRFLSGTKQQLSRDSLLNGCHPGLGPLGIELRKNLAAEWWSSVVVFREQVFPVDALHREPGPSLPVDNGFRLVSAETLREILQDKELSKEQLVAFLENLLNTSGKLRENLLHGALEHYVSYLDLVNKRLPFGLAQIGACFHPVSDTKQTPDGVKRIGEKTEASLVWFTSARTASQWLDFWLRHRLLWWRKFAMSPSNFSSGDCQDEAGRKGNRLYYNFPWGKEPIETLWNLGDHELLHMYPGSVAQVHGRDGRKNVVPSVLSINGDLDRGMLAYLYDSFQLTENSFTRKKDLHRKVLKLHPCLAPIKAALDVGRGPTVELRQVCQGLFNELLENGISVWPGYLETVQSSLEQLYSKYDEMSILFTVLITEATLENGLIQLRSRDTTMKEMMHISKVKDFLTKYISSAKNV.

The interval 28–67 (RQPEQLSKGTGSFVGPVRSQAELPRNEPREAPESGGEGSE) is disordered.

In terms of assembly, heterotrimer composed of a catalytic subunit and a homodimer of accessory subunits (POLG:POLG2).

It localises to the mitochondrion. The protein localises to the mitochondrion matrix. The protein resides in the mitochondrion nucleoid. Accessory subunit of DNA polymerase gamma solely responsible for replication of mitochondrial DNA (mtDNA). Acts as an allosteric regulator of the holoenzyme activities. Enhances the polymerase activity and the processivity of POLG by increasing its interactions with the DNA template. Suppresses POLG exonucleolytic proofreading especially toward homopolymeric templates bearing mismatched termini. Binds to single-stranded DNA. This chain is DNA polymerase subunit gamma-2 (POLG2), found in Bos taurus (Bovine).